Here is an 804-residue protein sequence, read N- to C-terminus: Probable exo-1,4-beta-xylosidase xlnD (804 aa).

The N-terminal stretch at 1–17 (MAVAALALLALLPQALG) is a signal peptide. Asn-20, Asn-115, Asn-139, Asn-234, and Asn-243 each carry an N-linked (GlcNAc...) asparagine glycan. Asp-307 is an active-site residue. 12 N-linked (GlcNAc...) asparagine glycosylation sites follow: Asn-349, Asn-382, Asn-404, Asn-433, Asn-444, Asn-485, Asn-489, Asn-621, Asn-652, Asn-666, Asn-688, and Asn-710.

This sequence belongs to the glycosyl hydrolase 3 family.

It localises to the secreted. It catalyses the reaction Hydrolysis of (1-&gt;4)-beta-D-xylans, to remove successive D-xylose residues from the non-reducing termini.. It functions in the pathway glycan degradation; xylan degradation. In terms of biological role, xylan 1,4-beta-xylosidase involved in the hydrolysis of xylan, a major structural heterogeneous polysaccharide found in plant biomass representing the second most abundant polysaccharide in the biosphere, after cellulose. This Aspergillus japonicus protein is Probable exo-1,4-beta-xylosidase xlnD (xlnD).